The following is a 788-amino-acid chain: Protein translocase subunit SecA 2 (788 aa).

Residues glutamine 86, 104-108 (GEGKT), and aspartate 493 each bind ATP.

This sequence belongs to the SecA family. In terms of assembly, monomer and homodimer. Part of the essential Sec protein translocation apparatus which comprises SecA, SecYEG and auxiliary proteins SecDF. Other proteins may also be involved.

The protein localises to the cell membrane. It localises to the cytoplasm. The catalysed reaction is ATP + H2O + cellular proteinSide 1 = ADP + phosphate + cellular proteinSide 2.. Functionally, part of the Sec protein translocase complex. Interacts with the SecYEG preprotein conducting channel. Has a central role in coupling the hydrolysis of ATP to the transfer of proteins into and across the cell membrane, serving as an ATP-driven molecular motor driving the stepwise translocation of polypeptide chains across the membrane. This is Protein translocase subunit SecA 2 from Geobacillus thermodenitrificans (strain NG80-2).